Here is a 536-residue protein sequence, read N- to C-terminus: Chaperonin GroEL 2 (536 aa).

Residues 29-32 (TLGP), Lys-50, Gly-416, and Asp-497 contribute to the ATP site.

Belongs to the chaperonin (HSP60) family. As to quaternary structure, forms a cylinder of 14 subunits composed of two heptameric rings stacked back-to-back. Interacts with the co-chaperonin GroES.

It localises to the cytoplasm. It catalyses the reaction ATP + H2O + a folded polypeptide = ADP + phosphate + an unfolded polypeptide.. In terms of biological role, together with its co-chaperonin GroES, plays an essential role in assisting protein folding. The GroEL-GroES system forms a nano-cage that allows encapsulation of the non-native substrate proteins and provides a physical environment optimized to promote and accelerate protein folding. The chain is Chaperonin GroEL 2 from Chlamydia caviae (strain ATCC VR-813 / DSM 19441 / 03DC25 / GPIC) (Chlamydophila caviae).